Here is a 178-residue protein sequence, read N- to C-terminus: ATP-dependent protease subunit HslV (178 aa).

The active site involves Thr-7. Residues Gly-162, Cys-165, and Thr-168 each contribute to the Na(+) site.

It belongs to the peptidase T1B family. HslV subfamily. In terms of assembly, a double ring-shaped homohexamer of HslV is capped on each side by a ring-shaped HslU homohexamer. The assembly of the HslU/HslV complex is dependent on binding of ATP.

Its subcellular location is the cytoplasm. It catalyses the reaction ATP-dependent cleavage of peptide bonds with broad specificity.. Its activity is regulated as follows. Allosterically activated by HslU binding. Functionally, protease subunit of a proteasome-like degradation complex believed to be a general protein degrading machinery. The chain is ATP-dependent protease subunit HslV from Burkholderia cenocepacia (strain ATCC BAA-245 / DSM 16553 / LMG 16656 / NCTC 13227 / J2315 / CF5610) (Burkholderia cepacia (strain J2315)).